Here is a 92-residue protein sequence, read N- to C-terminus: Cell division protein FtsB (92 aa).

Residues 1-3 (MRL) lie on the Cytoplasmic side of the membrane. A helical transmembrane segment spans residues 4 to 21 (FVFFMLCLLVLLQYHLWF). Residues 22 to 92 (GKNGLGDRHN…TFFRIVPKED (71 aa)) lie on the Periplasmic side of the membrane. Positions 28–62 (DRHNLQEEVTLILENNSELRQRNQMMFSEIKDLKE) form a coiled coil.

The protein belongs to the FtsB family. Part of a complex composed of FtsB, FtsL and FtsQ.

The protein resides in the cell inner membrane. Essential cell division protein. May link together the upstream cell division proteins, which are predominantly cytoplasmic, with the downstream cell division proteins, which are predominantly periplasmic. The sequence is that of Cell division protein FtsB from Psychromonas ingrahamii (strain DSM 17664 / CCUG 51855 / 37).